Here is a 40-residue protein sequence, read N- to C-terminus: Photosystem II reaction center protein J (40 aa).

The chain crosses the membrane as a helical span at residues 8-28 (IPLWVIGTVAGIPVIGLIGIF).

Belongs to the PsbJ family. In terms of assembly, PSII is composed of 1 copy each of membrane proteins PsbA, PsbB, PsbC, PsbD, PsbE, PsbF, PsbH, PsbI, PsbJ, PsbK, PsbL, PsbM, PsbT, PsbX, PsbY, PsbZ, Psb30/Ycf12, at least 3 peripheral proteins of the oxygen-evolving complex and a large number of cofactors. It forms dimeric complexes.

Its subcellular location is the plastid. It is found in the chloroplast thylakoid membrane. One of the components of the core complex of photosystem II (PSII). PSII is a light-driven water:plastoquinone oxidoreductase that uses light energy to abstract electrons from H(2)O, generating O(2) and a proton gradient subsequently used for ATP formation. It consists of a core antenna complex that captures photons, and an electron transfer chain that converts photonic excitation into a charge separation. This chain is Photosystem II reaction center protein J, found in Nasturtium officinale (Watercress).